The following is a 356-amino-acid chain: GTPase Obg (356 aa).

Residues Met1 to Ile159 form the Obg domain. An OBG-type G domain is found at Ala160–Gly327. GTP contacts are provided by residues Gly166–Ser173, Phe191–His195, Asp212–Gly215, Asn279–Asp282, and Ser308–Ala310. The Mg(2+) site is built by Ser173 and Thr193. Positions Gly327–Gly356 are disordered.

It belongs to the TRAFAC class OBG-HflX-like GTPase superfamily. OBG GTPase family. Monomer. It depends on Mg(2+) as a cofactor.

It is found in the cytoplasm. In terms of biological role, an essential GTPase which binds GTP, GDP and possibly (p)ppGpp with moderate affinity, with high nucleotide exchange rates and a fairly low GTP hydrolysis rate. Plays a role in control of the cell cycle, stress response, ribosome biogenesis and in those bacteria that undergo differentiation, in morphogenesis control. The protein is GTPase Obg of Bradyrhizobium sp. (strain ORS 278).